The following is a 429-amino-acid chain: Homocysteine synthase (429 aa).

An N6-(pyridoxal phosphate)lysine modification is found at K210.

Belongs to the trans-sulfuration enzymes family. As to quaternary structure, homotetramer. The cofactor is pyridoxal 5'-phosphate.

The protein localises to the cytoplasm. It is found in the nucleus. It carries out the reaction O-acetyl-L-homoserine + methanethiol = L-methionine + acetate + H(+). The enzyme catalyses O-acetyl-L-homoserine + hydrogen sulfide = L-homocysteine + acetate. The protein operates within amino-acid biosynthesis; L-methionine biosynthesis via de novo pathway; L-homocysteine from O-acetyl-L-homoserine. Its function is as follows. Catalyzes the conversion of O-acetyl-L-homoserine (OAH) into homocysteine in the methionine biosynthesis pathway. Can also use O-succinyl-L-homoserine and L-homoserine as substrates. Also has cysteine synthase (O-acetylserine sulfhydrylase) activity in vitro, but in S.pombe, it seems only to be involved in the alternative pathway of methionine biosynthesis under cysteine deficiency conditions. The sequence is that of Homocysteine synthase from Schizosaccharomyces pombe (strain 972 / ATCC 24843) (Fission yeast).